The following is a 200-amino-acid chain: Transcription elongation factor A protein-like 3 (200 aa).

Over residues 1–19 (MEEVRGENEGKLEKEGKPE) the composition is skewed to basic and acidic residues. Positions 1–200 (MEEVRGENEG…QRGLHDIPYL (200 aa)) are disordered. Acidic residues predominate over residues 20 to 34 (DEVEPEDEEKSDEDE). Phosphoserine is present on S30. Composition is skewed to basic and acidic residues over residues 47–85 (GKPE…KPDS), 94–106 (RAAE…DYVP), and 114–153 (DRGT…EELR).

This sequence belongs to the TFS-II family. TFA subfamily.

The protein resides in the nucleus. In terms of biological role, may be involved in transcriptional regulation. The polypeptide is Transcription elongation factor A protein-like 3 (Tceal3) (Mus musculus (Mouse)).